Here is a 1072-residue protein sequence, read N- to C-terminus: Rho family-interacting cell polarization regulator 2 (1072 aa).

The stretch at 83-112 (NGLDEYLEVHQTELDKLTAQLKDMRRNSRL) forms a coiled coil. The segment at 173–470 (RESLTEINRS…ATTATQHRAR (298 aa)) is necessary for interaction with NCAM and myoblast protrusion formation. 2 disordered regions span residues 439 to 465 (DRVPPANSAEPSSAHVTSSPDIATTAT) and 683 to 718 (EVEKNSYRTEHPEARGHLQRSLTEDTGVGTSVAGSP). Polar residues predominate over residues 447 to 460 (AEPSSAHVTSSPDI). Residues 683-698 (EVEKNSYRTEHPEARG) show a composition bias toward basic and acidic residues.

This sequence belongs to the RIPOR family. In terms of assembly, homooligomer; homooligomerization is regulated by RHOC and leads to the formation of concatemers through the association of N- and C-termini. Interacts with NCAM; this interaction is necessary for myoblast protrusion formation. As to expression, expressed in myoblast and myotubes (at protein level). Expressed in brain, eyes and skeletal muscle.

The protein localises to the cytoplasm. It is found in the cytoskeleton. The protein resides in the cell projection. It localises to the filopodium. Its subcellular location is the apical cell membrane. The protein localises to the stereocilium. It is found in the stereocilium membrane. Acts as an inhibitor of the small GTPase RHOA and plays several roles in the regulation of myoblast and hair cell differentiation, lymphocyte T proliferation and neutrophil polarization. Plays a role in fetal mononuclear myoblast differentiation by promoting filopodia and myotube formation. Maintains naive T lymphocytes in a quiescent state and prevents chemokine-induced T lymphocyte responses, such as cell adhesion, polarization and migration. Involved also in the regulation of neutrophil polarization, chemotaxis and adhesion. Required for normal development of inner and outer hair cell stereocilia within the cochlea of the inner ear. Plays a role for maintaining the structural organization of the basal domain of stereocilia. Involved in mechanosensory hair cell function. Required for normal hearing. The polypeptide is Rho family-interacting cell polarization regulator 2 (Coturnix japonica (Japanese quail)).